A 185-amino-acid chain; its full sequence is Peptide deformylase (185 aa).

Fe cation-binding residues include cysteine 98 and histidine 140. The active site involves glutamate 141. Histidine 144 lines the Fe cation pocket.

This sequence belongs to the polypeptide deformylase family. Requires Fe(2+) as cofactor.

The catalysed reaction is N-terminal N-formyl-L-methionyl-[peptide] + H2O = N-terminal L-methionyl-[peptide] + formate. In terms of biological role, removes the formyl group from the N-terminal Met of newly synthesized proteins. Requires at least a dipeptide for an efficient rate of reaction. N-terminal L-methionine is a prerequisite for activity but the enzyme has broad specificity at other positions. The protein is Peptide deformylase of Parabacteroides distasonis (strain ATCC 8503 / DSM 20701 / CIP 104284 / JCM 5825 / NCTC 11152).